The sequence spans 146 residues: Hemoglobin subunit beta (146 aa).

V1 bears the N-acetylvaline mark. Residues 2–146 (HLTGEEKAAV…VANALAHKYH (145 aa)) form the Globin domain. Phosphothreonine is present on T12. The residue at position 44 (S44) is a Phosphoserine. K59 carries the N6-acetyllysine modification. Residue H63 participates in heme b binding. K82 is subject to N6-acetyllysine. H92 lines the heme b pocket. C93 carries the post-translational modification S-nitrosocysteine. An N6-acetyllysine modification is found at K144.

This sequence belongs to the globin family. In terms of assembly, heterotetramer of two alpha chains and two beta chains. In terms of tissue distribution, red blood cells.

Its function is as follows. Involved in oxygen transport from the lung to the various peripheral tissues. This chain is Hemoglobin subunit beta (HBB), found in Ailurus fulgens (Himalayan red panda).